The chain runs to 302 residues: NADH-cytochrome b5 reductase 2 (302 aa).

A propeptide spans 1-41 (MFSRLSRSHSKALPIALGTVAIAAATAFYFANRNQHSFVFN) (removed in mature form). A helical transmembrane segment spans residues 12-32 (ALPIALGTVAIAAATAFYFAN). The FAD-binding FR-type domain occupies 51–155 (DKWIDLPISK…KGPIMKWKWQ (105 aa)). 158–193 (QFKSITLLGAGTGINPLYQLAHHIVENPNDKTKVNL) contributes to the FAD binding site. The residue at position 278 (serine 278) is a Phosphoserine.

This sequence belongs to the flavoprotein pyridine nucleotide cytochrome reductase family. The cofactor is FAD. There are two isoforms of NADH-cytochrome b5 reductase, a 34 kDa form (p34) and a 32 kDa form (p32). The p34 form becomes firmly anchored to the outer mitochondrial membrane after an incomplete translocation arrest. The p32 form is formed after translocation of the p34 precursor to the inner mitochondrial membrane, where it is processed by mitochondrial inner membrane peptidase (IMP) complex and released to the intermembrane space.

The protein localises to the mitochondrion intermembrane space. It is found in the mitochondrion outer membrane. It catalyses the reaction 2 Fe(III)-[cytochrome b5] + NADH = 2 Fe(II)-[cytochrome b5] + NAD(+) + H(+). The outer membrane form may mediate the reduction of outer membrane cytochrome b5, and the soluble inter-membrane space form may transfer electrons from external NADH to cytochrome c, thereby mediating an antimycin-insensitive, energy-coupled oxidation of external NADH by yeast mitochondria. Involved in the reduction of D-erythroascorbyl free radicals. The protein is NADH-cytochrome b5 reductase 2 (MCR1) of Saccharomyces cerevisiae (strain YJM789) (Baker's yeast).